Here is a 103-residue protein sequence, read N- to C-terminus: ATP synthase subunit H, mitochondrial (103 aa).

The N-terminal 26 residues, 1–26 (MSRILKSLSRSYSTTSPRLYVDVVQG), are a transit peptide targeting the mitochondrion.

It belongs to the ATPase h subunit family. F-type ATPases have 2 components, CF(1) - the catalytic core - and CF(0) - the membrane proton channel.

Its subcellular location is the mitochondrion. The protein localises to the mitochondrion inner membrane. Mitochondrial membrane ATP synthase (F(1)F(0) ATP synthase or Complex V) produces ATP from ADP in the presence of a proton gradient across the membrane which is generated by electron transport complexes of the respiratory chain. F-type ATPases consist of two structural domains, F(1) - containing the extramembraneous catalytic core and F(0) - containing the membrane proton channel, linked together by a central stalk and a peripheral stalk. During catalysis, ATP synthesis in the catalytic domain of F(1) is coupled via a rotary mechanism of the central stalk subunits to proton translocation. Part of the complex F(0) domain. Minor subunit located with subunit a in the membrane. This chain is ATP synthase subunit H, mitochondrial (atp14), found in Schizosaccharomyces pombe (strain 972 / ATCC 24843) (Fission yeast).